A 782-amino-acid polypeptide reads, in one-letter code: Cleavage and polyadenylation specificity factor subunit 2 (782 aa).

The segment covering 407-416 has biased composition (basic and acidic residues); that stretch reads KKLEQSKEAD. A disordered region spans residues 407-449; sequence KKLEQSKEADIDSSDESDIEEDIDQPSAHKTKHDLMMKGEGSR. Over residues 417–430 the composition is skewed to acidic residues; sequence IDSSDESDIEEDID. A phosphoserine mark is found at S419, S420, and S423. Positions 439 to 449 are enriched in basic and acidic residues; the sequence is HDLMMKGEGSR. Phosphoserine is present on S660.

It belongs to the metallo-beta-lactamase superfamily. RNA-metabolizing metallo-beta-lactamase-like family. CPSF2/YSH1 subfamily. Component of the cleavage and polyadenylation specificity factor (CPSF) complex, composed of CPSF1, CPSF2, CPSF3, CPSF4 and FIP1L1. Interacts with CPSF3, CSTF2 and SYMPK. Interacts with ZC3H3.

It is found in the nucleus. Its function is as follows. Component of the cleavage and polyadenylation specificity factor (CPSF) complex that play a key role in pre-mRNA 3'-end formation, recognizing the AAUAAA signal sequence and interacting with poly(A) polymerase and other factors to bring about cleavage and poly(A) addition. Involved in the histone 3' end pre-mRNA processing. The sequence is that of Cleavage and polyadenylation specificity factor subunit 2 (CPSF2) from Homo sapiens (Human).